The sequence spans 69 residues: DNA gyrase inhibitor YacG (69 aa).

Zn(2+) is bound by residues C14, C17, C33, and C37. A disordered region spans residues 46 to 69 (ADEEKSIPGAPDMSDSDGWSEDQY). Residues 59-69 (SDSDGWSEDQY) show a composition bias toward acidic residues.

It belongs to the DNA gyrase inhibitor YacG family. In terms of assembly, interacts with GyrB. The cofactor is Zn(2+).

In terms of biological role, inhibits all the catalytic activities of DNA gyrase by preventing its interaction with DNA. Acts by binding directly to the C-terminal domain of GyrB, which probably disrupts DNA binding by the gyrase. This is DNA gyrase inhibitor YacG from Aliivibrio fischeri (strain ATCC 700601 / ES114) (Vibrio fischeri).